The following is a 658-amino-acid chain: Deoxynucleoside triphosphate triphosphohydrolase SAMHD1 (658 aa).

The disordered stretch occupies residues 23–68 (SQPRVSEVAMQSAPLEQPAKRPRCDGSPRTPPSTPPATANLSADDD). At Ser49 the chain carries Phosphoserine. Position 52 is a phosphothreonine (Thr52). Phosphoserine is present on Ser55. A Phosphothreonine modification is found at Thr56. Ser64 and Ser125 each carry phosphoserine. The SAM domain maps to 77–142 (WEPEDVCSFL…IECIQQLSQS (66 aa)). 2 residues coordinate GTP: Lys148 and Val149. Asn151 contributes to the dGTP binding site. Residues Asp169, Gln174, and Arg177 each contribute to the GTP site. DGTP-binding residues include Leu182 and Val188. The region spanning 196 to 348 (RFEHSLGVGY…GIDVDKWDYF (153 aa)) is the HD domain. The Mn(2+) site is built by His199, His238, and Asp239. DGTP contacts are provided by Asp239, His247, His265, and Glu266. The active site involves His265. Asp343 contacts Mn(2+). 9 residues coordinate dGTP: Tyr347, Asp351, Arg365, Arg395, Lys397, Asn401, Tyr417, His419, and Lys420. GTP is bound by residues Arg494 and Lys498. Lys509 participates in a covalent cross-link: Glycyl lysine isopeptide (Lys-Gly) (interchain with G-Cter in SUMO2). Residue Lys565 participates in GTP binding. Lys565 contributes to the dGTP binding site. Phosphothreonine is present on Thr634. The residue at position 634 (Thr634) is a (Microbial infection) Phosphothreonine.

It belongs to the SAMHD1 family. Homodimer; in absence of GTP and dNTP. Homotetramer; in GTP- and dNTP-bound form. Interacts with MRE11; leading to stimulate the exonuclease activity of MRE11. Interacts with RBBP8/CtIP. Interacts with RBBP8/CtIP. Interacts (via its C-terminus) with CD81. Zn(2+) is required as a cofactor. In terms of processing, phosphorylation at Thr-634 by CDK1 acts as a switch to control deoxynucleoside triphosphate (dNTPase)-dependent and -independent functions. Phosphorylation at Thr-634 takes place in cycling cells: it reduces the stability of the homotetramer, impairing the dNTPase activity and subsequent ability to restrict infection by viruses. It also inhibits ability to suppress LINE-1 retrotransposon activity. In contrast, phosphorylation at Thr-634 promotes DNA end resection at stalled replication forks in response to DNA damage. (Microbial infection) Phosphorylation at Thr-634 by mouse cytomegalovirus kinase M97 leads to a reduced level of dNTP hydrolase activity and the loss of viral restriction. Post-translationally, not phosphorylated by CDK1 at the C-terminus.

The protein resides in the nucleus. It localises to the chromosome. It catalyses the reaction a 2'-deoxyribonucleoside 5'-triphosphate + H2O = a 2'-deoxyribonucleoside + triphosphate + H(+). It carries out the reaction dATP + H2O = 2'-deoxyadenosine + triphosphate + H(+). The catalysed reaction is dCTP + H2O = 2'-deoxycytidine + triphosphate + H(+). The enzyme catalyses dGTP + H2O = 2'-deoxyguanosine + triphosphate + H(+). It catalyses the reaction dTTP + H2O = thymidine + triphosphate + H(+). Allosterically activated and regulated via the combined actions of GTP and dNTPs (dATP, dGTP, dTTP and dCTP): Allosteric site 1 binds GTP, while allosteric site 2 binds dNTP. Allosteric activation promotes the formation of highly active homotetramers. Isoform 1: Phosphorylation at Thr-634 impairs homotetramerization, thereby inhibiting dNTPase activity, leading to reduced ability to restrict infection by viruses. In terms of biological role, protein that acts both as a host restriction factor involved in defense response to virus and as a regulator of DNA end resection at stalled replication forks. Has deoxynucleoside triphosphate (dNTPase) activity, which is required to restrict infection by viruses: dNTPase activity reduces cellular dNTP levels to levels too low for retroviral reverse transcription to occur, blocking early-stage virus replication in dendritic and other myeloid cells. Likewise, suppresses LINE-1 retrotransposon activity. In addition to virus restriction, dNTPase activity acts as a regulator of DNA precursor pools by regulating dNTP pools. Phosphorylation at Thr-634 acts as a switch to control dNTPase-dependent and -independent functions: it inhibits dNTPase activity and ability to restrict infection by viruses, while it promotes DNA end resection at stalled replication forks. Functions during S phase at stalled DNA replication forks to promote the resection of gapped or reversed forks: acts by stimulating the exonuclease activity of MRE11, activating the ATR-CHK1 pathway and allowing the forks to restart replication. Its ability to promote degradation of nascent DNA at stalled replication forks is required to prevent induction of type I interferons, thereby preventing chronic inflammation. Ability to promote DNA end resection at stalled replication forks is independent of dNTPase activity. Enhances immunoglobulin hypermutation in B-lymphocytes by promoting transversion mutation. This Mus musculus (Mouse) protein is Deoxynucleoside triphosphate triphosphohydrolase SAMHD1.